The chain runs to 274 residues: MDSWEDFLVEDPAKPAEFDFPLGKDSQSSSKPKKRFDDEEDEDEEENKESLQNDSHSVSQKSSSSSQNDQGSNKMTRIQQKIQERNFEKAIKASEAAAKEESLESSKEAMRQAEIDSDLANAMDLFDIVDKNSASANRSKQADQRQLKTKADYAAFQADILKKVKNCQTTAEYNNFVQDLIPLLLTGLNATNLKAVQKSVNKLVVNKEQQEKTQSKRGAAAPAAKPVSTAAPSKKGGKPTVNVNSKKTVADKSAYEDYIEDEYDDYADDFDDFM.

Disordered stretches follow at residues 1-110 (MDSW…KEAM) and 207-245 (KEQQEKTQSKRGAAAPAAKPVSTAAPSKKGGKPTVNVNS). Residues 38 to 47 (DEEDEDEEEN) show a composition bias toward acidic residues. A compositionally biased stretch (low complexity) spans 52 to 73 (QNDSHSVSQKSSSSSQNDQGSN). Residues 82 to 110 (IQERNFEKAIKASEAAAKEESLESSKEAM) show a composition bias toward basic and acidic residues. The segment covering 219–234 (AAAPAAKPVSTAAPSK) has biased composition (low complexity).

Belongs to the eIF-3 subunit J family. In terms of assembly, component of the eukaryotic translation initiation factor 3 (eIF-3) complex. The eIF-3 complex appears to include tif32/eif3a, SPAC25G10.08/eif3b, tif33/eif3c, SPBC4C3.07/eif3f, tif35/eif3g and sum1/eif3i. This set of common subunits may also associate exclusively with either moe1/eif3d and int6/eif3e, or with SPAC821.05/eif3h and SPAC1751.03/eif3m. The eIF-3 complex may also include SPAC3A12.13c/eif3j. Interacts with sad1.

It localises to the cytoplasm. Its function is as follows. Component of the eukaryotic translation initiation factor 3 (eIF-3) complex, which is involved in protein synthesis of a specialized repertoire of mRNAs and, together with other initiation factors, stimulates binding of mRNA and methionyl-tRNAi to the 40S ribosome. The eIF-3 complex specifically targets and initiates translation of a subset of mRNAs involved in cell proliferation. The protein is Probable eukaryotic translation initiation factor 3 subunit J of Schizosaccharomyces pombe (strain 972 / ATCC 24843) (Fission yeast).